The following is a 96-amino-acid chain: Cysteine protease immunity 1 (96 aa).

In Escherichia coli O1:K1:H7 (strain ATCC 11775 / DSM 30083 / JCM 1649 / NBRC 102203 / NCTC 9001 / U5/41), this protein is Cysteine protease immunity 1.